The chain runs to 364 residues: Fructose-bisphosphate aldolase C (364 aa).

A Phosphotyrosine modification is found at Tyr5. Ser36, Ser39, and Ser45 each carry phosphoserine. Arg56 lines the substrate pocket. Lys111 is subject to N6-acetyllysine. The residue at position 132 (Ser132) is a Phosphoserine. Lys147 contributes to the substrate binding site. Glu188 serves as the catalytic Proton acceptor. The Schiff-base intermediate with dihydroxyacetone-P role is filled by Lys230.

The protein belongs to the class I fructose-bisphosphate aldolase family. In terms of assembly, homotetramer. Interacts with ATP6V1E1. May interact with PLD2.

It carries out the reaction beta-D-fructose 1,6-bisphosphate = D-glyceraldehyde 3-phosphate + dihydroxyacetone phosphate. It participates in carbohydrate degradation; glycolysis; D-glyceraldehyde 3-phosphate and glycerone phosphate from D-glucose: step 4/4. This chain is Fructose-bisphosphate aldolase C (ALDOC), found in Homo sapiens (Human).